The following is a 395-amino-acid chain: Innexin inx3 (395 aa).

Residues 1–37 are Cytoplasmic-facing; sequence MAVFGMVSAVSGFIKIRYLLDKAVIDNMVFRCHYRIT. The chain crosses the membrane as a helical span at residues 38 to 58; it reads TAILFTCCIIVTANNLIGDPI. At 59-114 the chain is on the extracellular side; sequence SCINDGAIPMHVINTFCWITYTYTIPGQQHRQIGTDVAGPGLGNEYGQEKRYHSYY. Residues 115-135 traverse the membrane as a helical segment; it reads QWVPFVLFFQGLMFYVPHWVW. Residues 136–183 are Cytoplasmic-facing; the sequence is KNMEDGKIRMITDGLRGMVSVPDDYRRDRQDRILKYFVNSLNTHNGYS. A helical membrane pass occupies residues 184–204; it reads FAYFFCELLNFINVIVNIFMV. Residues 205-272 are Extracellular-facing; sequence DKFLGGAFMS…VLALNILNEK (68 aa). The helical transmembrane segment at 273–293 threads the bilayer; it reads IYIFLWFWFIILATISGVAVL. The Cytoplasmic segment spans residues 294 to 395; sequence YSLVVIMMPT…TFGGGKETET (102 aa). Phosphoserine occurs at positions 366 and 377. Tyr-381 carries the phosphotyrosine modification.

This sequence belongs to the pannexin family. In terms of assembly, heterooligomer of Inx2 (via cytoplasmic C-terminal region) and Inx3 (via cytoplasmic C-terminal region). In ovary, expressed in nurse cells and follicle cells. Expressed in embryonic epithelial cells. Ubiquitously expressed in stage 5 embryos. Expressed in foregut and hindgut from stage 11-17 and in proventriculus, epidermis and CNS in stage 16 embryos (at protein level). Expressed in anterior and ventral regions in stage 8 embryos. Repeating epidermal pattern emerges at stage 11, refines to one or two cells at each side of the segment borders by stage 13. Expressed in the imaginal wing disk. In pupae, expressed in the CNS and in secondary and tertiary pigment cells of the retina.

It localises to the cell membrane. Its subcellular location is the cell junction. The protein localises to the gap junction. It is found in the cytoplasm. The protein resides in the lateral cell membrane. It localises to the apicolateral cell membrane. Its function is as follows. Structural components of the gap junctions. Essential for proper epithelial development of the epidermis. This chain is Innexin inx3 (Inx3), found in Drosophila melanogaster (Fruit fly).